The primary structure comprises 380 residues: RNA-binding motif protein, Y chromosome (380 aa).

An RRM domain is found at 8–86; the sequence is GKIFIGGLNI…KRIKVKQARR (79 aa). Disordered regions lie at residues 82-226 and 279-358; these read KQAR…STSR and HEAP…YSAS. Residues 166–178 show a composition bias toward polar residues; that stretch reads RSATSAQTRSNTG. 2 stretches are compositionally biased toward basic and acidic residues: residues 180–190 and 333–351; these read RGREPHRREIS and IDRE…HSPK.

In terms of assembly, interacts with SRSF3/SRP20, SRSF9/SRP30, SRSF5/SRP40, and SRSF6/SRP55; this interaction inhibits SRSF family member pre-mRNA splicing. Interacts with splicing factor proteins and KHDRBS3. Testis-specific.

The protein localises to the nucleus. Its function is as follows. RNA-binding protein involved in pre-mRNA splicing. Required for sperm development. Acts additively with TRA2B to promote exon 7 inclusion of the survival motor neuron SMN. Binds non-specifically to mRNAs. The polypeptide is RNA-binding motif protein, Y chromosome (Mus musculus (Mouse)).